The chain runs to 424 residues: Glutamyl-tRNA reductase (424 aa).

Residues 49 to 52 (TCNR), S107, 112 to 114 (EPQ), and Q118 contribute to the substrate site. The active-site Nucleophile is the C50. Residue 187 to 192 (GAGETI) participates in NADP(+) binding.

Belongs to the glutamyl-tRNA reductase family. As to quaternary structure, homodimer.

The enzyme catalyses (S)-4-amino-5-oxopentanoate + tRNA(Glu) + NADP(+) = L-glutamyl-tRNA(Glu) + NADPH + H(+). Its pathway is porphyrin-containing compound metabolism; protoporphyrin-IX biosynthesis; 5-aminolevulinate from L-glutamyl-tRNA(Glu): step 1/2. Its function is as follows. Catalyzes the NADPH-dependent reduction of glutamyl-tRNA(Glu) to glutamate 1-semialdehyde (GSA). This chain is Glutamyl-tRNA reductase, found in Chromohalobacter salexigens (strain ATCC BAA-138 / DSM 3043 / CIP 106854 / NCIMB 13768 / 1H11).